The sequence spans 447 residues: tRNA modification GTPase MnmE (447 aa).

Positions 22, 81, and 121 each coordinate (6S)-5-formyl-5,6,7,8-tetrahydrofolate. The TrmE-type G domain maps to 217-373 (GIVLAITGET…LMSEIVSYAE (157 aa)). Asparagine 227 contributes to the K(+) binding site. GTP-binding positions include 227–232 (NTGKSS), 246–252 (SDIPGTT), and 271–274 (DTAG). A Mg(2+)-binding site is contributed by serine 231. The K(+) site is built by serine 246, isoleucine 248, and threonine 251. Threonine 252 is a Mg(2+) binding site. Lysine 447 contacts (6S)-5-formyl-5,6,7,8-tetrahydrofolate.

The protein belongs to the TRAFAC class TrmE-Era-EngA-EngB-Septin-like GTPase superfamily. TrmE GTPase family. As to quaternary structure, homodimer. Heterotetramer of two MnmE and two MnmG subunits. Requires K(+) as cofactor.

It is found in the cytoplasm. In terms of biological role, exhibits a very high intrinsic GTPase hydrolysis rate. Involved in the addition of a carboxymethylaminomethyl (cmnm) group at the wobble position (U34) of certain tRNAs, forming tRNA-cmnm(5)s(2)U34. In Orientia tsutsugamushi (strain Boryong) (Rickettsia tsutsugamushi), this protein is tRNA modification GTPase MnmE.